The following is a 234-amino-acid chain: UPF0173 metal-dependent hydrolase RL2074 (234 aa).

This sequence belongs to the UPF0173 family.

This Rhizobium johnstonii (strain DSM 114642 / LMG 32736 / 3841) (Rhizobium leguminosarum bv. viciae) protein is UPF0173 metal-dependent hydrolase RL2074.